The primary structure comprises 131 residues: Profilin-2 (131 aa).

This sequence belongs to the profilin family. Occurs in many kinds of cells as a complex with monomeric actin in a 1:1 ratio.

Its subcellular location is the cytoplasm. The protein localises to the cytoskeleton. In terms of biological role, binds to actin and affects the structure of the cytoskeleton. At high concentrations, profilin prevents the polymerization of actin, whereas it enhances it at low concentrations. By binding to PIP2, it inhibits the formation of IP3 and DG. This Solanum lycopersicum (Tomato) protein is Profilin-2.